A 1174-amino-acid polypeptide reads, in one-letter code: RecBCD enzyme subunit RecB (1174 aa).

The interval 1 to 852 (MKIDSLKEKL…GGKTMNYEGL (852 aa)) is DNA-binding and helicase activity, interacts with RecC. The 446-residue stretch at 4–449 (DSLKEKLNIF…YYLDTNWRSS (446 aa)) folds into the UvrD-like helicase ATP-binding domain. 25-32 (ASAGTGKT) provides a ligand contact to ATP. Residues 479–745 (PSSKNLKMNF…KIITIHKSKG (267 aa)) enclose the UvrD-like helicase C-terminal domain. The tract at residues 900-1174 (TWSITSFSQL…LIKKTMTLIS (275 aa)) is nuclease activity, interacts with RecD and RecA. Positions 957, 1068, and 1081 each coordinate Mg(2+). The active-site For nuclease activity is Asp1081.

It belongs to the helicase family. UvrD subfamily. As to quaternary structure, heterotrimer of RecB, RecC and RecD. All subunits contribute to DNA-binding. Interacts with RecA. Requires Mg(2+) as cofactor.

It carries out the reaction Exonucleolytic cleavage (in the presence of ATP) in either 5'- to 3'- or 3'- to 5'-direction to yield 5'-phosphooligonucleotides.. The enzyme catalyses Couples ATP hydrolysis with the unwinding of duplex DNA by translocating in the 3'-5' direction.. It catalyses the reaction ATP + H2O = ADP + phosphate + H(+). Functionally, a helicase/nuclease that prepares dsDNA breaks (DSB) for recombinational DNA repair. Binds to DSBs and unwinds DNA via a highly rapid and processive ATP-dependent bidirectional helicase activity. Unwinds dsDNA until it encounters a Chi (crossover hotspot instigator) sequence from the 3' direction. Cuts ssDNA a few nucleotides 3' to the Chi site. The properties and activities of the enzyme are changed at Chi. The Chi-altered holoenzyme produces a long 3'-ssDNA overhang and facilitates RecA-binding to the ssDNA for homologous DNA recombination and repair. Holoenzyme degrades any linearized DNA that is unable to undergo homologous recombination. In the holoenzyme this subunit contributes ATPase, 3'-5' helicase, exonuclease activity and loads RecA onto ssDNA. In Buchnera aphidicola subsp. Acyrthosiphon pisum (strain APS) (Acyrthosiphon pisum symbiotic bacterium), this protein is RecBCD enzyme subunit RecB.